Reading from the N-terminus, the 57-residue chain is uncharacterized protein (57 aa).

2 consecutive transmembrane segments (helical) span residues 4–26 (VNIL…SELW) and 33–55 (ALGY…IAIL).

It is found in the cell membrane. This is an uncharacterized protein from Methanocaldococcus jannaschii (strain ATCC 43067 / DSM 2661 / JAL-1 / JCM 10045 / NBRC 100440) (Methanococcus jannaschii).